Here is a 110-residue protein sequence, read N- to C-terminus: MALWMRLLPLLVLLALWGPDPASAFVNQHLCGSHLVEALYLVCGERGFFYTPKTRREAEDLQVGQVELGGGPGAGSLQPLALEGSLQKRGIVEQCCTSICSLYQLENYCN.

The N-terminal stretch at 1–24 is a signal peptide; sequence MALWMRLLPLLVLLALWGPDPASA. 3 disulfides stabilise this stretch: Cys-31-Cys-96, Cys-43-Cys-109, and Cys-95-Cys-100. Positions 57–87 are cleaved as a propeptide — c peptide; that stretch reads EAEDLQVGQVELGGGPGAGSLQPLALEGSLQ.

This sequence belongs to the insulin family. As to quaternary structure, heterodimer of a B chain and an A chain linked by two disulfide bonds.

It is found in the secreted. Functionally, insulin decreases blood glucose concentration. It increases cell permeability to monosaccharides, amino acids and fatty acids. It accelerates glycolysis, the pentose phosphate cycle, and glycogen synthesis in liver. In Pan troglodytes (Chimpanzee), this protein is Insulin (INS).